The primary structure comprises 289 residues: ATP synthase gamma chain (289 aa).

This sequence belongs to the ATPase gamma chain family. F-type ATPases have 2 components, CF(1) - the catalytic core - and CF(0) - the membrane proton channel. CF(1) has five subunits: alpha(3), beta(3), gamma(1), delta(1), epsilon(1). CF(0) has three main subunits: a, b and c.

Its subcellular location is the cell inner membrane. Its function is as follows. Produces ATP from ADP in the presence of a proton gradient across the membrane. The gamma chain is believed to be important in regulating ATPase activity and the flow of protons through the CF(0) complex. The chain is ATP synthase gamma chain from Halorhodospira halophila (strain DSM 244 / SL1) (Ectothiorhodospira halophila (strain DSM 244 / SL1)).